Reading from the N-terminus, the 495-residue chain is UDP-glycosyltransferase 1 (495 aa).

The active-site Proton acceptor is histidine 24. Histidine 24 is a binding site for an anthocyanidin. Aspartate 129 serves as the catalytic Charge relay. UDP-alpha-D-glucose contacts are provided by glutamine 358, histidine 373, tryptophan 376, asparagine 377, serine 378, and glutamate 381. Glycine 396 provides a ligand contact to an anthocyanidin. UDP-alpha-D-glucose is bound by residues aspartate 397 and glutamine 398.

It belongs to the UDP-glycosyltransferase family.

It catalyses the reaction oleanolate + UDP-alpha-D-glucose = oleanolate 3-O-beta-D-glucoside + UDP + H(+). Functionally, catalyzes the transfer of a glucose (Glc) moiety from UDP-Glc to the C-3 position of the oleanane sapogenins oleanolate and hederagenin. The monoglucosylated hederagenin 3-O-beta-D-glucoside is a feeding deterrent of the yellow-striped flea beetle (Phyllotreta nemorum). The chain is UDP-glycosyltransferase 1 from Barbarea vulgaris (Yellow rocket).